A 343-amino-acid chain; its full sequence is Cathepsin Q (343 aa).

Positions 1-20 (MTPAVFLVILCLGVVPGASA) are cleaved as a signal peptide. Residues 21 to 124 (LDLSLDVQWQ…FPNSWNWRDA (104 aa)) constitute a propeptide, activation peptide. Disulfide bonds link Cys-146–Cys-189 and Cys-180–Cys-222. Cys-149 is an active-site residue. A glycan (N-linked (GlcNAc...) asparagine) is linked at Asn-228. A disulfide bridge links Cys-280 with Cys-332. His-286 is a catalytic residue. An N-linked (GlcNAc...) asparagine glycan is attached at Asn-298. The active site involves Asn-310.

It belongs to the peptidase C1 family. In terms of tissue distribution, highly expressed in placenta.

The protein localises to the lysosome. This is Cathepsin Q (Ctsq) from Rattus norvegicus (Rat).